Here is a 199-residue protein sequence, read N- to C-terminus: Protein OPI10 homolog (199 aa).

It belongs to the OPI10 family.

This is Protein OPI10 homolog from Aedes aegypti (Yellowfever mosquito).